The sequence spans 506 residues: Glycerol kinase (506 aa).

T11 contributes to the ADP binding site. Residues T11, S12, and S13 each contribute to the ATP site. T11 contacts sn-glycerol 3-phosphate. Position 15 (R15) interacts with ADP. The sn-glycerol 3-phosphate site is built by R81, E82, Y133, and D242. Residues R81, E82, Y133, D242, and Q243 each coordinate glycerol. Residues T264 and G316 each contribute to the ADP site. Positions 264, 316, 320, and 421 each coordinate ATP. Positions 421 and 425 each coordinate ADP.

The protein belongs to the FGGY kinase family.

It catalyses the reaction glycerol + ATP = sn-glycerol 3-phosphate + ADP + H(+). It participates in polyol metabolism; glycerol degradation via glycerol kinase pathway; sn-glycerol 3-phosphate from glycerol: step 1/1. With respect to regulation, inhibited by fructose 1,6-bisphosphate (FBP). Functionally, key enzyme in the regulation of glycerol uptake and metabolism. Catalyzes the phosphorylation of glycerol to yield sn-glycerol 3-phosphate. The protein is Glycerol kinase of Paracidovorax citrulli (strain AAC00-1) (Acidovorax citrulli).